A 180-amino-acid polypeptide reads, in one-letter code: Centromere protein M (180 aa).

As to quaternary structure, component of the CENPA-NAC complex, at least composed of CENPA, CENPC, CENPH, CENPM, CENPN, CENPT and CENPU. The CENPA-NAC complex interacts with the CENPA-CAD complex, composed of CENPI, CENPK, CENPL, CENPO, CENPP, CENPQ, CENPR and CENPS.

It is found in the nucleus. It localises to the cytoplasm. Its subcellular location is the chromosome. The protein resides in the centromere. The protein localises to the kinetochore. Functionally, component of the CENPA-NAC (nucleosome-associated) complex, a complex that plays a central role in assembly of kinetochore proteins, mitotic progression and chromosome segregation. The CENPA-NAC complex recruits the CENPA-CAD (nucleosome distal) complex and may be involved in incorporation of newly synthesized CENPA into centromeres. In Bos taurus (Bovine), this protein is Centromere protein M (CENPM).